The primary structure comprises 718 residues: Heme peroxidase 2 (718 aa).

A signal peptide spans 1–19; that stretch reads MNLKPTILLFTILFLKCAT. The propeptide occupies 20-146; sequence FEVNEETERI…QANRRCSSPP (127 aa). Disordered stretches follow at residues 41 to 64 and 108 to 144; these read RASE…ANSD and LLQS…RCSS. Polar residues predominate over residues 45-64; that stretch reads NSESEQTSQHIIVSQQANSD. Positions 109 to 118 are enriched in low complexity; the sequence is LQSSETTTTT. Over residues 126-139 the composition is skewed to basic residues; sequence SKRSAIFRSKRQAN. A disulfide bond links cysteine 149 and cysteine 164. Histidine 241 functions as the Proton acceptor in the catalytic mechanism. Aspartate 242 provides a ligand contact to Ca(2+). Cysteines 262 and 272 form a disulfide. Ca(2+) contacts are provided by serine 311, phenylalanine 313, aspartate 315, and serine 317. Residue asparagine 354 is glycosylated (N-linked (GlcNAc...) asparagine). Cysteine 358 and cysteine 366 are joined by a disulfide. Histidine 477 provides a ligand contact to heme b. Residues asparagine 551, asparagine 592, asparagine 662, and asparagine 673 are each glycosylated (N-linked (GlcNAc...) asparagine). Cysteine 682 and cysteine 705 are oxidised to a cystine.

This sequence belongs to the peroxidase family. Heme b is required as a cofactor. In terms of tissue distribution, expressed in the hypodermis and gland cells of the pharynx. Specifically, there is low and transient expression from the distal bulb of the pharynx to the anterior of the buccal cavity. Whole body expression levels increase upon entry into the dauer phase.

Its subcellular location is the secreted. It catalyses the reaction 2 a phenolic donor + H2O2 = 2 a phenolic radical donor + 2 H2O. Its function is as follows. Peroxidase which is involved in maintaining the cuticle integrity in the hypodermis and pharynx. It thus plays a role in conferring resistance against Gram-positive bacteria such as E.faecalis, S.aureus and C.diphtheriae, and yeast such as C.albicans. The protein is Heme peroxidase 2 of Caenorhabditis elegans.